An 85-amino-acid chain; its full sequence is Large ribosomal subunit protein bL31 (85 aa).

The interval 64 to 85 is disordered; sequence KYGMSESQGAGGKGNAKKKDEK.

Belongs to the bacterial ribosomal protein bL31 family. Type A subfamily. As to quaternary structure, part of the 50S ribosomal subunit.

In terms of biological role, binds the 23S rRNA. The polypeptide is Large ribosomal subunit protein bL31 (Acaryochloris marina (strain MBIC 11017)).